The sequence spans 331 residues: Ornithine carbamoyltransferase (331 aa).

Residues 55–58, Gln-82, Arg-106, and 133–136 each bind carbamoyl phosphate; these read STRT and HPTQ. L-ornithine is bound by residues Asn-166, Asp-230, and 234–235; that span reads SM. Carbamoyl phosphate is bound by residues 272–273 and Arg-317; that span reads CL.

This sequence belongs to the aspartate/ornithine carbamoyltransferase superfamily. OTCase family.

The protein localises to the cytoplasm. It carries out the reaction carbamoyl phosphate + L-ornithine = L-citrulline + phosphate + H(+). It functions in the pathway amino-acid biosynthesis; L-arginine biosynthesis; L-arginine from L-ornithine and carbamoyl phosphate: step 1/3. Its function is as follows. Reversibly catalyzes the transfer of the carbamoyl group from carbamoyl phosphate (CP) to the N(epsilon) atom of ornithine (ORN) to produce L-citrulline. The protein is Ornithine carbamoyltransferase of Neisseria meningitidis serogroup C / serotype 2a (strain ATCC 700532 / DSM 15464 / FAM18).